The chain runs to 623 residues: Kelch-like protein diablo (623 aa).

The disordered stretch occupies residues 1–54 (MGDLPGSGSTAQPRDAAVTGTGGNSTAGGGSSVGSTAVDRPPSPARLSHTSEKH). Position 19 is a phosphothreonine (Thr-19). Positions 20 to 32 (GTGGNSTAGGGSS) are enriched in gly residues. The 68-residue stretch at 72-139 (CDVVLNVGGR…CYTAHIIVEE (68 aa)) folds into the BTB domain. A BACK domain is found at 174 to 276 (CLGIRAFADT…SPKFLVGTVG (103 aa)). Kelch repeat units follow at residues 323 to 369 (VLFA…VLND), 371 to 417 (LYAV…VLDG), 418 to 464 (FLYA…VLGG), 466 to 511 (LYAI…VFNN), 513 to 558 (IYAV…VVNG), and 559 to 605 (QLYA…VMRA).

It functions in the pathway protein modification; protein ubiquitination. Functionally, probable substrate-specific adapter of an E3 ubiquitin-protein ligase complex which mediates the ubiquitination and subsequent proteasomal degradation of target proteins. May have a role in synapse differentiation and growth. The polypeptide is Kelch-like protein diablo (Drosophila melanogaster (Fruit fly)).